A 206-amino-acid polypeptide reads, in one-letter code: Large ribosomal subunit protein uL4 (206 aa).

Residues 44 to 87 (NRQGTQSAKTRSEVSGGGRKPWRQKGTGHARQGSTRSPQWTGGG) form a disordered region.

Belongs to the universal ribosomal protein uL4 family. Part of the 50S ribosomal subunit.

Functionally, one of the primary rRNA binding proteins, this protein initially binds near the 5'-end of the 23S rRNA. It is important during the early stages of 50S assembly. It makes multiple contacts with different domains of the 23S rRNA in the assembled 50S subunit and ribosome. Forms part of the polypeptide exit tunnel. This Lachnospira eligens (strain ATCC 27750 / DSM 3376 / VPI C15-48 / C15-B4) (Eubacterium eligens) protein is Large ribosomal subunit protein uL4.